The following is a 378-amino-acid chain: Lipid-A-disaccharide synthase (378 aa).

Belongs to the LpxB family.

It carries out the reaction a lipid X + a UDP-2-N,3-O-bis[(3R)-3-hydroxyacyl]-alpha-D-glucosamine = a lipid A disaccharide + UDP + H(+). Its pathway is bacterial outer membrane biogenesis; LPS lipid A biosynthesis. Functionally, condensation of UDP-2,3-diacylglucosamine and 2,3-diacylglucosamine-1-phosphate to form lipid A disaccharide, a precursor of lipid A, a phosphorylated glycolipid that anchors the lipopolysaccharide to the outer membrane of the cell. The chain is Lipid-A-disaccharide synthase from Pseudomonas aeruginosa (strain LESB58).